A 547-amino-acid chain; its full sequence is MSAKEVKFGVDARDRMMRGVDILANAVKVTLGPKGRNVVLDKSFGAPRITKDGVTVAKEIELDDKFENMGAQMVREVASKSADAAGDGTTTATVLAQAIVREGGKAVAAGMNPMDLKRGIDLAVEAVVADLVKNSKKVTSNEEIAQVGTISANGDVEIGKFLSDAMKKVGNEGVITVEEAKSLETELDVVEGMQFDRGYISPYFVTNADKMRVEFDDAYILINEKKLSNLNELLPLLEAVVQTGKPLVIVAEDVEGEALATLVVNRLRGGLKVAAVKAPGFGDRRKAMLQDIAILTGGQAISEDLGIKMENVTLQMLGKAKKVMIDKENTTIVNGAGKKADIEARVAQIKAQIEETTSDYDREKLQERLAKLAGGVAVIRVGGATEIEVKERKDRVDDAMHATRAAVEEGIVPGGGVALLRASEQLKRIKTQNDDQKTGVEIVRKALSAPARQIAINAGEDGSVIVGKVLEKDQYNYGFDSQTGEYGDLVKKGIIDPTKVVRTAIQNAASVAALLITTEAMVAELPKKGGAAGGMPPGGGGMGGMDF.

Residues 30 to 33, Lys-51, 87 to 91, Gly-415, and Asp-496 contribute to the ATP site; these read TLGP and DGTTT.

Belongs to the chaperonin (HSP60) family. As to quaternary structure, forms a cylinder of 14 subunits composed of two heptameric rings stacked back-to-back. Interacts with the co-chaperonin GroES.

The protein localises to the cytoplasm. It carries out the reaction ATP + H2O + a folded polypeptide = ADP + phosphate + an unfolded polypeptide.. Its function is as follows. Together with its co-chaperonin GroES, plays an essential role in assisting protein folding. The GroEL-GroES system forms a nano-cage that allows encapsulation of the non-native substrate proteins and provides a physical environment optimized to promote and accelerate protein folding. In Rhodopseudomonas palustris (strain BisB5), this protein is Chaperonin GroEL 1.